Here is a 341-residue protein sequence, read N- to C-terminus: Anthranilate phosphoribosyltransferase (341 aa).

5-phospho-alpha-D-ribose 1-diphosphate is bound by residues glycine 80, 83–84 (GD), threonine 88, 90–93 (NIST), 108–116 (KHGNRAVSS), and serine 120. Glycine 80 is a binding site for anthranilate. Serine 92 is a binding site for Mg(2+). Residue asparagine 111 participates in anthranilate binding. Position 166 (arginine 166) interacts with anthranilate. Mg(2+) contacts are provided by aspartate 225 and glutamate 226.

The protein belongs to the anthranilate phosphoribosyltransferase family. In terms of assembly, homodimer. The cofactor is Mg(2+).

It catalyses the reaction N-(5-phospho-beta-D-ribosyl)anthranilate + diphosphate = 5-phospho-alpha-D-ribose 1-diphosphate + anthranilate. Its pathway is amino-acid biosynthesis; L-tryptophan biosynthesis; L-tryptophan from chorismate: step 2/5. In terms of biological role, catalyzes the transfer of the phosphoribosyl group of 5-phosphorylribose-1-pyrophosphate (PRPP) to anthranilate to yield N-(5'-phosphoribosyl)-anthranilate (PRA). In Priestia megaterium (strain ATCC 12872 / QMB1551) (Bacillus megaterium), this protein is Anthranilate phosphoribosyltransferase.